Reading from the N-terminus, the 210-residue chain is Peroxiredoxin-5, mitochondrial (210 aa).

The transit peptide at 1–48 (MLQLGLRVLGCKASSVLRASTCLAGRAGRKEAGWECGGARSFSSSAVT) directs the protein to the mitochondrion. One can recognise a Thioredoxin domain in the interval 52-210 (IKVGDAIPSV…SLAPNILSQL (159 aa)). At lysine 70 the chain carries N6-acetyllysine; alternate. Residue lysine 70 is modified to N6-succinyllysine; alternate. At lysine 71 the chain carries N6-acetyllysine. At lysine 79 the chain carries N6-acetyllysine; alternate. The residue at position 79 (lysine 79) is an N6-succinyllysine; alternate. The Cysteine sulfenic acid (-SOH) intermediate role is filled by cysteine 96. Cysteine 96 is lipidated: S-palmitoyl cysteine. Cysteines 96 and 200 form a disulfide. The residue at position 112 (lysine 112) is an N6-succinyllysine. 2 positions are modified to phosphoserine: serine 167 and serine 178. Positions 208–210 (SQL) match the Microbody targeting signal motif.

This sequence belongs to the peroxiredoxin family. Prx5 subfamily. In terms of assembly, monomer. S-palmitoylated. Palmitoylation occurs on the active site, inhibiting its reactivity; therefore PRDX5 palmitoylation status determines its antioxidant capacity. Post-translationally, S-palmitoylated. Depalmitoylated by ABHD10. Widely expressed.

It localises to the mitochondrion. It is found in the cytoplasm. Its subcellular location is the peroxisome matrix. The enzyme catalyses a hydroperoxide + [thioredoxin]-dithiol = an alcohol + [thioredoxin]-disulfide + H2O. Functionally, thiol-specific peroxidase that catalyzes the reduction of hydrogen peroxide and organic hydroperoxides to water and alcohols, respectively. Plays a role in cell protection against oxidative stress by detoxifying peroxides and as sensor of hydrogen peroxide-mediated signaling events. In Mus musculus (Mouse), this protein is Peroxiredoxin-5, mitochondrial.